Here is a 641-residue protein sequence, read N- to C-terminus: Bifunctional protein glk (641 aa).

Residues 1 to 21 (MSTGAQTKAAEASQHADGPRL) are disordered. The glucokinase stretch occupies residues 1 to 340 (MSTGAQTKAA…QLSNRTGGAS (340 aa)). 23 to 28 (ADVGGT) is a binding site for ATP. In terms of domain architecture, HTH rpiR-type spans 341-417 (SAVFERIRQM…LKLATGLTGT (77 aa)). A putative HTH-type transcriptional regulator region spans residues 341–641 (SAVFERIRQM…SHGAAPAAKE (301 aa)). Positions 377–396 (IVDIARKADVSQPTVIRFCR) form a DNA-binding region, H-T-H motif. The SIS domain occupies 461–600 (AIDILNNARR…AVGVAIRRAS (140 aa)). Residues 576-596 (SMISRILHLVMIDILAVGVAI) traverse the membrane as a helical segment.

It in the N-terminal section; belongs to the bacterial glucokinase family.

It is found in the membrane. It carries out the reaction D-glucose + ATP = D-glucose 6-phosphate + ADP + H(+). The polypeptide is Bifunctional protein glk (glk) (Burkholderia thailandensis (strain ATCC 700388 / DSM 13276 / CCUG 48851 / CIP 106301 / E264)).